A 93-amino-acid chain; its full sequence is Cell division protein FtsB (93 aa).

At 1-3 (MRI) the chain is on the cytoplasmic side. A helical transmembrane segment spans residues 4–21 (FVIALTLLFGWLQYTLWF). The Periplasmic segment spans residues 22 to 93 (GKNGVSDYYT…FYRIVDEEEH (72 aa)). A coiled-coil region spans residues 31–75 (TVEDEIEVQQQVNSKLQARNNEMFAEIDDLRQGLDAIEERARHEL).

The protein belongs to the FtsB family. Part of a complex composed of FtsB, FtsL and FtsQ.

Its subcellular location is the cell inner membrane. In terms of biological role, essential cell division protein. May link together the upstream cell division proteins, which are predominantly cytoplasmic, with the downstream cell division proteins, which are predominantly periplasmic. In Vibrio campbellii (strain ATCC BAA-1116), this protein is Cell division protein FtsB.